Reading from the N-terminus, the 151-residue chain is Deoxyuridine 5'-triphosphate nucleotidohydrolase (151 aa).

Residues 70–72, N83, 87–89, and M97 contribute to the substrate site; these read RSG and LID.

It belongs to the dUTPase family. The cofactor is Mg(2+).

It carries out the reaction dUTP + H2O = dUMP + diphosphate + H(+). It participates in pyrimidine metabolism; dUMP biosynthesis; dUMP from dCTP (dUTP route): step 2/2. Its function is as follows. This enzyme is involved in nucleotide metabolism: it produces dUMP, the immediate precursor of thymidine nucleotides and it decreases the intracellular concentration of dUTP so that uracil cannot be incorporated into DNA. The polypeptide is Deoxyuridine 5'-triphosphate nucleotidohydrolase (Yersinia enterocolitica serotype O:8 / biotype 1B (strain NCTC 13174 / 8081)).